The following is a 410-amino-acid chain: Retrovirus-related Pol polyprotein from type-1 retrotransposable element R1 2 (410 aa).

Residues 1-118 enclose the Reverse transcriptase domain; the sequence is GCPQGSIGGP…SCFRYLGVNV (118 aa). Positions 254–410 are nucleic acid-binding endonuclease; it reads SSVIKLERLV…RLNLELDVNG (157 aa).

It carries out the reaction DNA(n) + a 2'-deoxyribonucleoside 5'-triphosphate = DNA(n+1) + diphosphate. The sequence is that of Retrovirus-related Pol polyprotein from type-1 retrotransposable element R1 2 from Nasonia vitripennis (Parasitic wasp).